We begin with the raw amino-acid sequence, 85 residues long: U4-theraphotoxin-Hhn1ab (85 aa).

Residues 1–22 form the signal peptide; that stretch reads MKVTLIAILTCAAVLVLHTTAA. Positions 23–48 are excised as a propeptide; the sequence is EELEAESQLMEVGMPDTELAAVDEER. 2 disulfide bridges follow: Cys-56-Cys-77 and Cys-71-Cys-82.

Belongs to the neurotoxin 12 (Hwtx-2) family. 02 (Hwtx-2) subfamily. Expressed by the venom gland.

Its subcellular location is the secreted. Functionally, postsynaptic neurotoxin. This is U4-theraphotoxin-Hhn1ab from Cyriopagopus hainanus (Chinese bird spider).